A 338-amino-acid chain; its full sequence is Aspartate-semialdehyde dehydrogenase (338 aa).

NADP(+) contacts are provided by residues 13–16 (TGAV) and 41–42 (RS). Position 101 (Arg101) interacts with phosphate. Catalysis depends on Cys130, which acts as the Acyl-thioester intermediate. A substrate-binding site is contributed by Gln157. 160-161 (SG) provides a ligand contact to NADP(+). Lys214 is a phosphate binding site. A substrate-binding site is contributed by Arg236. His243 serves as the catalytic Proton acceptor. Gln316 is an NADP(+) binding site.

It belongs to the aspartate-semialdehyde dehydrogenase family. In terms of assembly, homodimer.

The catalysed reaction is L-aspartate 4-semialdehyde + phosphate + NADP(+) = 4-phospho-L-aspartate + NADPH + H(+). Its pathway is amino-acid biosynthesis; L-lysine biosynthesis via DAP pathway; (S)-tetrahydrodipicolinate from L-aspartate: step 2/4. It functions in the pathway amino-acid biosynthesis; L-methionine biosynthesis via de novo pathway; L-homoserine from L-aspartate: step 2/3. The protein operates within amino-acid biosynthesis; L-threonine biosynthesis; L-threonine from L-aspartate: step 2/5. Functionally, catalyzes the NADPH-dependent formation of L-aspartate-semialdehyde (L-ASA) by the reductive dephosphorylation of L-aspartyl-4-phosphate. The polypeptide is Aspartate-semialdehyde dehydrogenase (asd) (Synechocystis sp. (strain ATCC 27184 / PCC 6803 / Kazusa)).